The chain runs to 199 residues: Probable DNA-directed RNA polymerase subunit delta (199 aa).

Residues 14–81 (LSLIEVAHAI…GDNMWGLRAW (68 aa)) enclose the HTH HARE-type domain. 3 stretches are compositionally biased toward acidic residues: residues 116–147 (GDDDDVIDYDDDDPEDDDNYDDDDDQDDDTDD), 157–171 (AGVDDTDDDVADETL), and 182–199 (LNDDDDDDDYDDEDDESK). The interval 116–199 (GDDDDVIDYD…DYDDEDDESK (84 aa)) is disordered.

Belongs to the RpoE family. As to quaternary structure, RNAP is composed of a core of 2 alpha, a beta and a beta' subunits. The core is associated with a delta subunit and one of several sigma factors.

Participates in both the initiation and recycling phases of transcription. In the presence of the delta subunit, RNAP displays an increased specificity of transcription, a decreased affinity for nucleic acids, and an increased efficiency of RNA synthesis because of enhanced recycling. The polypeptide is Probable DNA-directed RNA polymerase subunit delta (Lactiplantibacillus plantarum (strain ATCC BAA-793 / NCIMB 8826 / WCFS1) (Lactobacillus plantarum)).